Here is a 128-residue protein sequence, read N- to C-terminus: Putative pre-16S rRNA nuclease (128 aa).

Belongs to the YqgF nuclease family.

The protein localises to the cytoplasm. In terms of biological role, could be a nuclease involved in processing of the 5'-end of pre-16S rRNA. In Campylobacter lari (strain RM2100 / D67 / ATCC BAA-1060), this protein is Putative pre-16S rRNA nuclease.